Reading from the N-terminus, the 642-residue chain is Capsid vertex component 2 (642 aa).

The interaction with major capsid protein/MCP stretch occupies residues 1–48; it reads MSLLHTFWRLPVAVFFEPHEENVLRCPERVLRRLLEDAAVTMRGGGWR. The tract at residues 97–125 is disordered; sequence DEGPSPRTLLQPPCRPRSSSPGTGVAGAS.

The protein belongs to the herpesviridae CVC2 protein family. Heterodimerizes with CVC1. Interacts with major capsid protein/MCP and triplex capsid protein 1/TRX1 at the pentamer vertices. Interacts with the large tegument protein/LTP.

It is found in the virion. The protein localises to the host nucleus. Capsid vertex-specific component that plays a role during viral DNA encapsidation, assuring correct genome cleavage and presumably stabilizing capsids that contain full-length viral genomes. Participates in the interaction between the capsid and the tegument through interaction with the large tegument protein/LTP. This chain is Capsid vertex component 2, found in Homo sapiens (Human).